The following is a 365-amino-acid chain: Peptide chain release factor 2 (365 aa).

Gln-252 is modified (N5-methylglutamine).

Belongs to the prokaryotic/mitochondrial release factor family. Post-translationally, methylated by PrmC. Methylation increases the termination efficiency of RF2.

The protein localises to the cytoplasm. Peptide chain release factor 2 directs the termination of translation in response to the peptide chain termination codons UGA and UAA. In Aeromonas hydrophila subsp. hydrophila (strain ATCC 7966 / DSM 30187 / BCRC 13018 / CCUG 14551 / JCM 1027 / KCTC 2358 / NCIMB 9240 / NCTC 8049), this protein is Peptide chain release factor 2.